Here is a 233-residue protein sequence, read N- to C-terminus: uncharacterized protein (233 aa).

Positions 196–212 (FFYEDYLIFDCRAKRRK) are the nascent chain stimulates ribosomal stalling during translation by interfering with the conformation of the peptidyl transferase center (PTC), and the translating mRNA by adopting a difficult-to-decode structure at the ribosome decoding center.

Its function is as follows. Acts as an endogenous target of the ribosome quality control (RQC) pathway. During translation, the nascent chain has a propensity to stall ribosomes, thereby stimulating activation of the RQC pathway. This is an uncharacterized protein from Saccharomyces cerevisiae (strain ATCC 204508 / S288c) (Baker's yeast).